The sequence spans 234 residues: 3,4-dihydroxy-2-butanone 4-phosphate synthase (234 aa).

Residues 39 to 40 (RE), aspartate 44, 152 to 156 (RRGHT), and glutamate 176 contribute to the D-ribulose 5-phosphate site. Glutamate 40 is a binding site for Mg(2+). Histidine 155 is a binding site for Mg(2+).

Belongs to the DHBP synthase family. Homodimer. Mg(2+) is required as a cofactor. The cofactor is Mn(2+).

The enzyme catalyses D-ribulose 5-phosphate = (2S)-2-hydroxy-3-oxobutyl phosphate + formate + H(+). Its pathway is cofactor biosynthesis; riboflavin biosynthesis; 2-hydroxy-3-oxobutyl phosphate from D-ribulose 5-phosphate: step 1/1. Its function is as follows. Catalyzes the conversion of D-ribulose 5-phosphate to formate and 3,4-dihydroxy-2-butanone 4-phosphate. This chain is 3,4-dihydroxy-2-butanone 4-phosphate synthase, found in Pelobacter propionicus (strain DSM 2379 / NBRC 103807 / OttBd1).